The sequence spans 258 residues: MYRRIIMCFRSRATLNSFQRGMCCSTRRYVSSTGSEDDIKNFIIDNTEIVNSQSLTPEISLRLFTPTCRFWTENPEFWPFPDPYWAIYWPGGQALARYLLNNPEVSAGRKVLDLGCGCGASAIAARLSGASCVVANDIDPIAAIATKMNCELNNLAPLPCVTDNMIGSETDGWDLILLGDMFYDEALADGLHQWLQTCTNTHGTQVLIGDPGRAQFEDHNIRRSLHRLAHFQLPDSVKEENYGLTSSAVWRYNCKPDH.

Belongs to the methyltransferase superfamily. ETFBKMT family.

The protein localises to the cytoplasm. It localises to the mitochondrion matrix. The enzyme catalyses L-lysyl-[protein] + 3 S-adenosyl-L-methionine = N(6),N(6),N(6)-trimethyl-L-lysyl-[protein] + 3 S-adenosyl-L-homocysteine + 3 H(+). Its function is as follows. Protein-lysine methyltransferase that selectively trimethylates the flavoprotein ETFB in mitochondria. Thereby, may negatively regulate the function of ETFB in electron transfer from Acyl-CoA dehydrogenases to the main respiratory chain. The sequence is that of Electron transfer flavoprotein beta subunit lysine methyltransferase from Danio rerio (Zebrafish).